The sequence spans 103 residues: Small ribosomal subunit protein bS18c (103 aa).

This sequence belongs to the bacterial ribosomal protein bS18 family. In terms of assembly, part of the 30S ribosomal subunit.

It is found in the plastid. It localises to the chloroplast. This Chlorella vulgaris (Green alga) protein is Small ribosomal subunit protein bS18c (rps18).